The sequence spans 355 residues: Protein RecA (355 aa).

Residue 67–74 (GPESSGKT) participates in ATP binding. Positions 336-355 (NSAASDYEDNENEEMNNEEF) are disordered. Positions 341 to 355 (DYEDNENEEMNNEEF) are enriched in acidic residues.

This sequence belongs to the RecA family.

The protein localises to the cytoplasm. Functionally, can catalyze the hydrolysis of ATP in the presence of single-stranded DNA, the ATP-dependent uptake of single-stranded DNA by duplex DNA, and the ATP-dependent hybridization of homologous single-stranded DNAs. It interacts with LexA causing its activation and leading to its autocatalytic cleavage. In Photorhabdus laumondii subsp. laumondii (strain DSM 15139 / CIP 105565 / TT01) (Photorhabdus luminescens subsp. laumondii), this protein is Protein RecA.